Reading from the N-terminus, the 586-residue chain is Alpha-1,2-mannosyltransferase MNN5 (586 aa).

An N-terminal signal peptide occupies residues 1-29; the sequence is MLIRLKKRKILQVIVSAVVLILFFCSVHN. Residues Asn113, Asn136, Asn259, and Asn264 are each glycosylated (N-linked (GlcNAc...) asparagine).

This sequence belongs to the MNN1/MNT family. Post-translationally, glycosylated.

The protein resides in the golgi apparatus. Its subcellular location is the cis-Golgi network. It participates in protein modification; protein glycosylation. Its function is as follows. Responsible for addition of first and second mannose residues to the outer chain of core N-linked polysaccharides and to O-linked mannotriose. Implicated in late Golgi modifications. This is Alpha-1,2-mannosyltransferase MNN5 (MNN5) from Saccharomyces cerevisiae (strain YJM789) (Baker's yeast).